Consider the following 96-residue polypeptide: Aspartyl/glutamyl-tRNA(Asn/Gln) amidotransferase subunit C (96 aa).

It belongs to the GatC family. As to quaternary structure, heterotrimer of A, B and C subunits.

The catalysed reaction is L-glutamyl-tRNA(Gln) + L-glutamine + ATP + H2O = L-glutaminyl-tRNA(Gln) + L-glutamate + ADP + phosphate + H(+). It catalyses the reaction L-aspartyl-tRNA(Asn) + L-glutamine + ATP + H2O = L-asparaginyl-tRNA(Asn) + L-glutamate + ADP + phosphate + 2 H(+). In terms of biological role, allows the formation of correctly charged Asn-tRNA(Asn) or Gln-tRNA(Gln) through the transamidation of misacylated Asp-tRNA(Asn) or Glu-tRNA(Gln) in organisms which lack either or both of asparaginyl-tRNA or glutaminyl-tRNA synthetases. The reaction takes place in the presence of glutamine and ATP through an activated phospho-Asp-tRNA(Asn) or phospho-Glu-tRNA(Gln). In Wolinella succinogenes (strain ATCC 29543 / DSM 1740 / CCUG 13145 / JCM 31913 / LMG 7466 / NCTC 11488 / FDC 602W) (Vibrio succinogenes), this protein is Aspartyl/glutamyl-tRNA(Asn/Gln) amidotransferase subunit C.